The sequence spans 309 residues: Tagatose-6-phosphate kinase 1 (309 aa).

The protein belongs to the carbohydrate kinase PfkB family. LacC subfamily.

It carries out the reaction D-tagatofuranose 6-phosphate + ATP = D-tagatofuranose 1,6-bisphosphate + ADP + H(+). It participates in carbohydrate metabolism; D-tagatose 6-phosphate degradation; D-glyceraldehyde 3-phosphate and glycerone phosphate from D-tagatose 6-phosphate: step 1/2. This chain is Tagatose-6-phosphate kinase 1, found in Streptococcus agalactiae serotype III (strain NEM316).